The sequence spans 159 residues: Ribosomal RNA large subunit methyltransferase H (159 aa).

S-adenosyl-L-methionine is bound by residues L76, G108, and 127-132 (FSKMTF).

It belongs to the RNA methyltransferase RlmH family. In terms of assembly, homodimer.

The protein resides in the cytoplasm. It carries out the reaction pseudouridine(1915) in 23S rRNA + S-adenosyl-L-methionine = N(3)-methylpseudouridine(1915) in 23S rRNA + S-adenosyl-L-homocysteine + H(+). Functionally, specifically methylates the pseudouridine at position 1915 (m3Psi1915) in 23S rRNA. The sequence is that of Ribosomal RNA large subunit methyltransferase H from Clostridium botulinum (strain Alaska E43 / Type E3).